A 215-amino-acid chain; its full sequence is MSAEQEKKTQGTTKEEQKSSFASEDVASKQTEEAKAVFGDGVAKQENKSGASTNDEKKPAEGDEDAEPASPEVHFEPIVKLSAVETKTNEEEETVEFKMRAKLFRFDKAASEWKERGTGDARLLKHKETGKTRLVMRRDKTLKVCANHLLMPEMKLTPNVGSDRSWVWTVAADVSEGEPTAETFAIRFANSENANLFKENFEKYQEENAKILKKN.

2 stretches are compositionally biased toward basic and acidic residues: residues 1–18 (MSAE…EEQK) and 26–35 (VASKQTEEAK). The segment at 1-78 (MSAEQEKKTQ…ASPEVHFEPI (78 aa)) is disordered. Serine 70 carries the phosphoserine modification. One can recognise a RanBD1 domain in the interval 74–210 (HFEPIVKLSA…FEKYQEENAK (137 aa)).

It belongs to the RANBP1 family.

Its subcellular location is the cytoplasm. Its function is as follows. Stimulates the GTPase activity in the presence of RNA1. May potentiate the action of RanGAP1 (RNA1), thus playing the role of a negative regulator. This Schizosaccharomyces pombe (strain 972 / ATCC 24843) (Fission yeast) protein is Ran-specific GTPase-activating protein 1 (sbp1).